A 45-amino-acid chain; its full sequence is Omega-hexatoxin-Hv2a (45 aa).

3 cysteine pairs are disulfide-bonded: C4–C18, C11–C24, and C17–C29.

It belongs to the neurotoxin 15 family. 02 (omega-actx) subfamily. Expressed by the venom gland.

The protein resides in the secreted. Functionally, potent inhibitor of insect (bee brain), but not mammalian (rat trigeminal neurons), voltage-gated calcium channels (Cav). In vivo, injection into lone star ticks (Amblyomma americanum) induces curling of all eight legs into closed loops, followed by death. This Hadronyche versuta (Blue mountains funnel-web spider) protein is Omega-hexatoxin-Hv2a.